The chain runs to 542 residues: GMP synthase [glutamine-hydrolyzing] (542 aa).

A Glutamine amidotransferase type-1 domain is found at 28 to 218; the sequence is MLVILDFGSQ…VYHICQCEPT (191 aa). Catalysis depends on cysteine 105, which acts as the Nucleophile. Active-site residues include histidine 192 and glutamate 194. The GMPS ATP-PPase domain occupies 219-417; the sequence is WTTEAFVEES…IGLPEEIVRR (199 aa). 246 to 252 is a binding site for ATP; that stretch reads SGGVDSS.

Homodimer.

The enzyme catalyses XMP + L-glutamine + ATP + H2O = GMP + L-glutamate + AMP + diphosphate + 2 H(+). Its pathway is purine metabolism; GMP biosynthesis; GMP from XMP (L-Gln route): step 1/1. Catalyzes the synthesis of GMP from XMP. The chain is GMP synthase [glutamine-hydrolyzing] from Rippkaea orientalis (strain PCC 8801 / RF-1) (Cyanothece sp. (strain PCC 8801)).